The chain runs to 234 residues: Large ribosomal subunit protein uL1 (234 aa).

It belongs to the universal ribosomal protein uL1 family. In terms of assembly, part of the 50S ribosomal subunit.

Functionally, binds directly to 23S rRNA. The L1 stalk is quite mobile in the ribosome, and is involved in E site tRNA release. Its function is as follows. Protein L1 is also a translational repressor protein, it controls the translation of the L11 operon by binding to its mRNA. The chain is Large ribosomal subunit protein uL1 from Pectobacterium atrosepticum (strain SCRI 1043 / ATCC BAA-672) (Erwinia carotovora subsp. atroseptica).